A 534-amino-acid polypeptide reads, in one-letter code: Putative fimbrium tip subunit Fim1C (534 aa).

An N-terminal signal peptide occupies residues 1 to 21 (MKQYKLMQVALLAILLFGWAG). Residue Cys22 is the site of N-palmitoyl cysteine attachment. Cys22 carries S-diacylglycerol cysteine lipidation. The propeptide occupies 22–54 (CSQNEEEVPGNVRNGIVLNVTDTGIISNEPSTR).

Belongs to the bacteroidetes fimbrillin superfamily. Mfa-like family. As to quaternary structure, may be part of the fimbrial tip.

Its subcellular location is the fimbrium. The protein resides in the cell outer membrane. In terms of biological role, probably a component of the fimbrium tip. Fimbriae are filamentous appendages on the cell surface that mediate cell adhesion and biofilm formation. In Bacteroides ovatus (strain ATCC 8483 / DSM 1896 / JCM 5824 / BCRC 10623 / CCUG 4943 / NCTC 11153), this protein is Putative fimbrium tip subunit Fim1C.